Here is a 159-residue protein sequence, read N- to C-terminus: Transcription elongation factor GreA (159 aa).

Positions 44–75 (SENAEYDAAREQQSQTEARIADLENKLSTATI) form a coiled coil.

The protein belongs to the GreA/GreB family.

Its function is as follows. Necessary for efficient RNA polymerase transcription elongation past template-encoded arresting sites. The arresting sites in DNA have the property of trapping a certain fraction of elongating RNA polymerases that pass through, resulting in locked ternary complexes. Cleavage of the nascent transcript by cleavage factors such as GreA or GreB allows the resumption of elongation from the new 3'terminus. GreA releases sequences of 2 to 3 nucleotides. This is Transcription elongation factor GreA from Chlorobium limicola (strain DSM 245 / NBRC 103803 / 6330).